The primary structure comprises 534 residues: Bifunctional pantoate ligase/cytidylate kinase (534 aa).

The pantoate--beta-alanine ligase stretch occupies residues 1–302; sequence MRLLTTVAAL…LGSTRLIDNT (302 aa). 48–55 is a binding site for ATP; that stretch reads MGSLHQGH. H55 acts as the Proton donor in catalysis. Position 79 (Q79) interacts with (R)-pantoate. Q79 contributes to the beta-alanine binding site. 172–175 serves as a coordination point for ATP; sequence GQKD. Q178 serves as a coordination point for (R)-pantoate. Residues V201 and 209-212 each bind ATP; that span reads CSSR. The segment at 303–534 is cytidylate kinase; it reads ILRDRQPIIA…DYYQQRLSQW (232 aa).

This sequence in the N-terminal section; belongs to the pantothenate synthetase family. The protein in the C-terminal section; belongs to the cytidylate kinase family. Type 1 subfamily.

The protein localises to the cytoplasm. The catalysed reaction is (R)-pantoate + beta-alanine + ATP = (R)-pantothenate + AMP + diphosphate + H(+). It catalyses the reaction CMP + ATP = CDP + ADP. It carries out the reaction dCMP + ATP = dCDP + ADP. It participates in cofactor biosynthesis; (R)-pantothenate biosynthesis; (R)-pantothenate from (R)-pantoate and beta-alanine: step 1/1. Catalyzes the condensation of pantoate with beta-alanine in an ATP-dependent reaction via a pantoyl-adenylate intermediate. In terms of biological role, catalyzes the transfer of a phosphate group from ATP to either CMP or dCMP to form CDP or dCDP and ADP, respectively. The polypeptide is Bifunctional pantoate ligase/cytidylate kinase (Nostoc sp. (strain PCC 7120 / SAG 25.82 / UTEX 2576)).